A 424-amino-acid polypeptide reads, in one-letter code: Tubulin-specific chaperone cofactor E-like protein (424 aa).

Phosphoserine occurs at positions 18 and 41. LRR repeat units follow at residues 73–98, 99–123, 124–147, 150–172, 173–197, 199–224, and 226–250; these read CAHVSELDLSDNKLQDWHEVSKIVSN, VPQLEFLNLSSNPLSLSVLERTCAG, SFSGVRKLVLNNSKASWETVHTIL, LPDLEELFLCLNDYETVSCPSVC, CHSLKLLHITDNNLQEWTEIRKLGV, FPSLDTLVLANNHVNAIEEPADSLAR, and FPNLRSISLHKSGLQSWEDIDKLNS. Residues 262–303 form the LRRCT domain; sequence IPLLQPYTTEERRKLVVARLPSVSKLNGSVVTDGEREDSERF. The region spanning 334-424 is the Ubiquitin-like domain; the sequence is AEVDLRPQSS…DKIFVESKTK (91 aa). A coiled-coil region spans residues 350–375; the sequence is FNDQVEEVSIRLDQTVAELKRQLKTL.

It localises to the cytoplasm. Its subcellular location is the cytoskeleton. In terms of biological role, acts as a regulator of tubulin stability. This chain is Tubulin-specific chaperone cofactor E-like protein (Tbcel), found in Rattus norvegicus (Rat).